The primary structure comprises 128 residues: Small ribosomal subunit protein eS8 (128 aa).

A disordered region spans residues 1–37 (MGYFQGNDFRKITGGKKGKHRDKRKFELGSPPTETKL). Residues 13-23 (TGGKKGKHRDK) show a composition bias toward basic residues.

This sequence belongs to the eukaryotic ribosomal protein eS8 family. In terms of assembly, part of the 30S ribosomal subunit.

The protein is Small ribosomal subunit protein eS8 of Sulfurisphaera tokodaii (strain DSM 16993 / JCM 10545 / NBRC 100140 / 7) (Sulfolobus tokodaii).